The sequence spans 212 residues: MKLILLIIAAYLLGSIPTGLWIGKYFYGKNLRDYGSGNMGTTNTFRVLGPKAGLLTFTVDFLKGTLATLLPMWLGVTHISPLLFGFFAILGHTFPIFANFKGGKAVATSAGILLGFAPFYLIFLLFIFFFTLYLTSMISLSSVIAASIAIITVLIFPALHFLLKDYDFLFVLIVISAGSLIIIRHRENLVRIKNKTESLVPFGLNITKQKTH.

Transmembrane regions (helical) follow at residues 3 to 23 (LILL…LWIG), 69 to 89 (LLPM…FFAI), 110 to 130 (AGIL…IFFF), 143 to 163 (VIAA…HFLL), and 165 to 185 (DYDF…IIRH).

It belongs to the PlsY family. As to quaternary structure, probably interacts with PlsX.

The protein resides in the cell membrane. The catalysed reaction is an acyl phosphate + sn-glycerol 3-phosphate = a 1-acyl-sn-glycero-3-phosphate + phosphate. Its pathway is lipid metabolism; phospholipid metabolism. Catalyzes the transfer of an acyl group from acyl-phosphate (acyl-PO(4)) to glycerol-3-phosphate (G3P) to form lysophosphatidic acid (LPA). This enzyme utilizes acyl-phosphate as fatty acyl donor, but not acyl-CoA or acyl-ACP. The protein is Glycerol-3-phosphate acyltransferase of Streptococcus mutans serotype c (strain ATCC 700610 / UA159).